Consider the following 311-residue polypeptide: Dehydrogenase/reductase SDR family member 7C (311 aa).

Residues 1–18 (MGLMAVLMLPLLLLGISG) form the signal peptide. The NAD(+) site is built by S47, L49, Y191, K195, and S226. Y191 acts as the Proton acceptor in catalysis.

Belongs to the short-chain dehydrogenases/reductases (SDR) family. In terms of tissue distribution, expressed in skeletal muscle and cardiac muscle. Also expressed in liver, kidney, adipocytes and skin.

The protein localises to the sarcoplasmic reticulum membrane. The catalysed reaction is all-trans-retinol + NAD(+) = all-trans-retinal + NADH + H(+). Functionally, NADH-dependent oxidoreductase which catalyzes the oxidation of all-trans-retinol to all-trans-retinal. Plays a role in the regulation of cardiac and skeletal muscle metabolic functions. Maintains Ca(2+) intracellular homeostasis by repressing Ca(2+) release from the sarcoplasmic reticulum (SR) in myotubes, possibly through local alternations in NAD/NADH or retinol/retinal. Also plays a role in Ca(2+) homeostasis by controlling Ca(2+) overload in the cytosol and the SR in myotubes. Involved in glucose uptake into skeletal muscles and muscle performance by activating PI3K and mTORC2-mediated AKT1 phosphorylation signaling pathways, possibly through the action of its downstream catalytic product all-trans-retinoic acid. The polypeptide is Dehydrogenase/reductase SDR family member 7C (Mus musculus (Mouse)).